Consider the following 405-residue polypeptide: MQYLILSLIFLIPSLGMLTGLSIAATVLFFLLIIVITELISFIRKQEFSKKFLIKLYPRFGFDDIFCVKNRIKTELLFIAWCFISCLFTIHPINSLVTFTKVFALLFLRFVNNVVTFQNILYLKNSLILGIITAILLFFIEYSSHGFLTRMFKTHFGLYMLDRGCALLSITTWVVIIILFSNGKNINAFILYIVVLYLLSISDSLASFVGFSIGGIIFILARLIKKIFFKLITISLITGSLLFPIIAKQIDPHNLSEKYLATKPSAAHRLFIWHFVANKIIIKPILGYGFASSKYIKTSDNEMIDYRGEKLHPLPLHPHNNILQITLELGILGLALFLCLVYKYLKEIDNIKISNFRAASYSCFINYYIIGMISYNIWQTWWILSGIWILVLMKLLVKPDIIIDN.

The next 10 helical transmembrane spans lie at 23 to 43 (IAAT…ISFI), 77 to 97 (LFIA…NSLV), 120 to 140 (ILYL…LFFI), 156 to 178 (FGLY…VIII), 201 to 221 (ISDS…FILA), 227 to 247 (IFFK…PIIA), 270 to 290 (LFIW…GYGF), 322 to 342 (ILQI…CLVY), 353 to 375 (ISNF…MISY), and 377 to 397 (IWQT…KLLV).

This sequence belongs to the O-antigen ligase family.

The protein localises to the membrane. This chain is Putative polysaccharide ligase RT0347, found in Rickettsia typhi (strain ATCC VR-144 / Wilmington).